The primary structure comprises 1399 residues: DNA-directed RNA polymerase subunit beta' (1399 aa).

Positions 71, 73, 86, and 89 each coordinate Zn(2+). Mg(2+) contacts are provided by D462, D464, and D466. The Zn(2+) site is built by C810, C884, C891, and C894. Residues 1379–1399 (KQAAIVPSQPEPQPLALPPAE) form a disordered region. A compositionally biased stretch (pro residues) spans 1387–1399 (QPEPQPLALPPAE).

The protein belongs to the RNA polymerase beta' chain family. As to quaternary structure, the RNAP catalytic core consists of 2 alpha, 1 beta, 1 beta' and 1 omega subunit. When a sigma factor is associated with the core the holoenzyme is formed, which can initiate transcription. Requires Mg(2+) as cofactor. It depends on Zn(2+) as a cofactor.

The enzyme catalyses RNA(n) + a ribonucleoside 5'-triphosphate = RNA(n+1) + diphosphate. Functionally, DNA-dependent RNA polymerase catalyzes the transcription of DNA into RNA using the four ribonucleoside triphosphates as substrates. The sequence is that of DNA-directed RNA polymerase subunit beta' from Bradyrhizobium sp. (strain ORS 278).